The primary structure comprises 364 residues: Uroporphyrinogen decarboxylase (364 aa).

Residues 28 to 32, Asp78, Tyr160, Thr215, and His333 contribute to the substrate site; that span reads RQAGR.

It belongs to the uroporphyrinogen decarboxylase family. As to quaternary structure, homodimer.

It is found in the cytoplasm. The enzyme catalyses uroporphyrinogen III + 4 H(+) = coproporphyrinogen III + 4 CO2. It functions in the pathway porphyrin-containing compound metabolism; protoporphyrin-IX biosynthesis; coproporphyrinogen-III from 5-aminolevulinate: step 4/4. Functionally, catalyzes the decarboxylation of four acetate groups of uroporphyrinogen-III to yield coproporphyrinogen-III. This chain is Uroporphyrinogen decarboxylase, found in Burkholderia mallei (strain NCTC 10247).